The chain runs to 212 residues: Deoxyribose-phosphate aldolase (212 aa).

Asp-89 (proton donor/acceptor) is an active-site residue. The active-site Schiff-base intermediate with acetaldehyde is Lys-151. Lys-180 serves as the catalytic Proton donor/acceptor.

Belongs to the DeoC/FbaB aldolase family. DeoC type 1 subfamily.

The protein localises to the cytoplasm. It catalyses the reaction 2-deoxy-D-ribose 5-phosphate = D-glyceraldehyde 3-phosphate + acetaldehyde. Its pathway is carbohydrate degradation; 2-deoxy-D-ribose 1-phosphate degradation; D-glyceraldehyde 3-phosphate and acetaldehyde from 2-deoxy-alpha-D-ribose 1-phosphate: step 2/2. Its function is as follows. Catalyzes a reversible aldol reaction between acetaldehyde and D-glyceraldehyde 3-phosphate to generate 2-deoxy-D-ribose 5-phosphate. The protein is Deoxyribose-phosphate aldolase of Clostridium botulinum (strain Loch Maree / Type A3).